The following is a 292-amino-acid chain: Glycine--tRNA ligase alpha subunit (292 aa).

The protein belongs to the class-II aminoacyl-tRNA synthetase family. In terms of assembly, tetramer of two alpha and two beta subunits.

It localises to the cytoplasm. It catalyses the reaction tRNA(Gly) + glycine + ATP = glycyl-tRNA(Gly) + AMP + diphosphate. In Pelobacter propionicus (strain DSM 2379 / NBRC 103807 / OttBd1), this protein is Glycine--tRNA ligase alpha subunit.